The sequence spans 347 residues: VIP36-like protein (347 aa).

Positions 1 to 43 (MAAASRPSWWQRWRRRAWARDGAKLLLFLLLLGSGPGPRHVRA) are cleaved as a signal peptide. Over 44 to 312 (GQAVEYLKRE…VPPTPLSGLA (269 aa)) the chain is Lumenal. One can recognise an L-type lectin-like domain in the interval 48 to 273 (EYLKREHSLS…DVISLKLFEL (226 aa)). A carbohydrate contacts are provided by S92 and D127. Residues D158, Y160, and N162 each coordinate Ca(2+). 160–162 (YPN) serves as a coordination point for a carbohydrate. An N-linked (GlcNAc...) asparagine glycan is attached at N180. H187 serves as a coordination point for a carbohydrate. D190 contributes to the Ca(2+) binding site. Cysteines 199 and 236 form a disulfide. 257-259 (GDL) is a binding site for a carbohydrate. A helical transmembrane segment spans residues 313-335 (LFLIVFFSLVFSVFAIVIGIILY). Residues 336–347 (NKWQDQSRKRFY) are Cytoplasmic-facing. The short motif at 343–345 (RKR) is the Endoplasmic reticulum retention signal element.

The protein localises to the endoplasmic reticulum membrane. It is found in the golgi apparatus membrane. In terms of biological role, may be involved in the regulation of export from the endoplasmic reticulum of a subset of glycoproteins. May function as a regulator of ERGIC-53. The chain is VIP36-like protein (Lman2l) from Mus musculus (Mouse).